The primary structure comprises 390 residues: Oxysterol-binding protein 10 (390 aa).

This sequence belongs to the OSBP family.

The polypeptide is Oxysterol-binding protein 10 (osbJ) (Dictyostelium discoideum (Social amoeba)).